The primary structure comprises 353 residues: Tetraacyldisaccharide 4'-kinase (353 aa).

ATP is bound at residue threonine 49–threonine 56.

Belongs to the LpxK family.

The catalysed reaction is a lipid A disaccharide + ATP = a lipid IVA + ADP + H(+). It participates in glycolipid biosynthesis; lipid IV(A) biosynthesis; lipid IV(A) from (3R)-3-hydroxytetradecanoyl-[acyl-carrier-protein] and UDP-N-acetyl-alpha-D-glucosamine: step 6/6. Transfers the gamma-phosphate of ATP to the 4'-position of a tetraacyldisaccharide 1-phosphate intermediate (termed DS-1-P) to form tetraacyldisaccharide 1,4'-bis-phosphate (lipid IVA). The protein is Tetraacyldisaccharide 4'-kinase of Chlorobium phaeovibrioides (strain DSM 265 / 1930) (Prosthecochloris vibrioformis (strain DSM 265)).